The primary structure comprises 223 residues: Cytidylate kinase (223 aa).

Gly17–Thr25 is a binding site for ATP.

It belongs to the cytidylate kinase family. Type 1 subfamily.

It localises to the cytoplasm. The enzyme catalyses CMP + ATP = CDP + ADP. The catalysed reaction is dCMP + ATP = dCDP + ADP. The protein is Cytidylate kinase of Bordetella bronchiseptica (strain ATCC BAA-588 / NCTC 13252 / RB50) (Alcaligenes bronchisepticus).